Here is a 436-residue protein sequence, read N- to C-terminus: MQVSVETVSNLQRRMTVQVPSERIEQEVDRRLKSLARRVKIDGFRPGKVPLKVVQQRYGAGVFQEVVGEVLQSSYQEALLQEKLEPAGSPSIEPKPLEPGKGLEYTATFDVFPKVEIADLSDVAVERPRVEVSDADVDKVIETLRRQRKEFVAVDRAAQKGDQVIVDFDGSLDGEAFEGGKGEAMPVELGEGRMLAAFEDQLNGMKPGDEKTIDVPFPEDYPAENLKGKTAQFAIKVREVKEPTLPEVDEAFAKSFGIEEGGVEKLREDVRANMEREVAQALKAKVKDQVMQALFKAHPLELPEALVKDEIERLRQQALSRFGGQVKPENFPDEVFREEAVRRVSLGLIIRELVASKGMKVDAGRVKAELEAMAAGYEDPRQVIDYYRNNRQAQSGLEAMVLEDQVVDFVVEQGKATDKPMSFDELMNPRKEGASE.

A PPIase FKBP-type domain is found at 161-246 (GDQVIVDFDG…VREVKEPTLP (86 aa)).

It belongs to the FKBP-type PPIase family. Tig subfamily.

It localises to the cytoplasm. The catalysed reaction is [protein]-peptidylproline (omega=180) = [protein]-peptidylproline (omega=0). Its function is as follows. Involved in protein export. Acts as a chaperone by maintaining the newly synthesized protein in an open conformation. Functions as a peptidyl-prolyl cis-trans isomerase. The chain is Trigger factor from Thioalkalivibrio sulfidiphilus (strain HL-EbGR7).